An 83-amino-acid polypeptide reads, in one-letter code: Large ribosomal subunit protein bL27 (83 aa).

A disordered region spans residues 1–25; sequence MAHKKGQGASRNGRDSESKRLGLKV.

It belongs to the bacterial ribosomal protein bL27 family.

The chain is Large ribosomal subunit protein bL27 from Chlamydia muridarum (strain MoPn / Nigg).